A 323-amino-acid polypeptide reads, in one-letter code: Acetylglutamate kinase (323 aa).

Residues Gly90 to Gly91, Arg112, and Asn218 contribute to the substrate site.

The protein belongs to the acetylglutamate kinase family. ArgB subfamily.

The protein resides in the cytoplasm. The catalysed reaction is N-acetyl-L-glutamate + ATP = N-acetyl-L-glutamyl 5-phosphate + ADP. It participates in amino-acid biosynthesis; L-arginine biosynthesis; N(2)-acetyl-L-ornithine from L-glutamate: step 2/4. Catalyzes the ATP-dependent phosphorylation of N-acetyl-L-glutamate. This chain is Acetylglutamate kinase, found in Ehrlichia canis (strain Jake).